A 408-amino-acid chain; its full sequence is 2-acyl-4-prenylphloroglucinol 6-prenyltransferase, chloroplastic (408 aa).

Residues 1–46 constitute a chloroplast transit peptide; it reads MELSSACNLSLKPNYYYYPTSLFPSNNSYNNLKASSYYQTQRPIKC. Transmembrane regions (helical) follow at residues 119-139, 146-166, 193-213, 217-237, 257-277, 281-301, 326-346, 355-375, and 388-408; these read PIPFVAVSIICTSLFGAELLK, WQLMFDAFQGLVVILLYHIYI, SVKSAWFLTIFSAVASLLLMI, CGLFLTCMYCCYLVIGAMYSV, IGIGINFLINYASRATLGLPF, PPFTFIIGFVSTLSIILSILK, IVLVGSGFFLLNYVAAIGVAI, YIMIPAHAIFASALIFKTWLL, and YYHFLWFLMIAEYILYPFIST.

It belongs to the UbiA prenyltransferase family. In terms of assembly, homo- and heteromer. Interacts with PT1L, forming a functional metabolon. Mg(2+) serves as cofactor. As to expression, expressed in trichomes.

The protein resides in the plastid. It is found in the chloroplast membrane. The catalysed reaction is a 2-acyl-4-prenylphloroglucinol + dimethylallyl diphosphate = a 2-acyl-4,6-diprenylphloroglucinol + diphosphate. It catalyses the reaction a 2-acyl-4,6-diprenylphloroglucinol + dimethylallyl diphosphate = a 2-acyl-4,6,6-triprenylphloroglucinol + diphosphate. The protein operates within secondary metabolite biosynthesis. Involved in the biosynthesis of prenylated phenolics natural products which contribute to the bitter taste of beer and display broad biological activities. Catalyzes the two last prenylation steps in the beta-bitter acid pathway. Uses dimethylallyl diphosphate (DMAPP) as the prenyl donor. This chain is 2-acyl-4-prenylphloroglucinol 6-prenyltransferase, chloroplastic, found in Humulus lupulus (European hop).